The following is a 463-amino-acid chain: Probable Xaa-Pro aminopeptidase PEPP (463 aa).

4 residues coordinate Mn(2+): Asp-259, Asp-270, Glu-393, and Glu-433.

It belongs to the peptidase M24B family. Mn(2+) is required as a cofactor.

The enzyme catalyses Release of any N-terminal amino acid, including proline, that is linked to proline, even from a dipeptide or tripeptide.. Catalyzes the removal of a penultimate prolyl residue from the N-termini of peptides. This chain is Probable Xaa-Pro aminopeptidase PEPP (PEPP), found in Phaeosphaeria nodorum (strain SN15 / ATCC MYA-4574 / FGSC 10173) (Glume blotch fungus).